The sequence spans 623 residues: Endoglucanase 7 (623 aa).

Residues M1 to V79 are Cytoplasmic-facing. A helical; Signal-anchor for type II membrane protein membrane pass occupies residues F80 to I100. Over V101 to P623 the chain is Extracellular. N-linked (GlcNAc...) asparagine glycans are attached at residues N116, N221, N328, N349, N412, N429, and N464. Residue H517 is part of the active site. The N-linked (GlcNAc...) asparagine glycan is linked to N548. The active site involves D565. The N-linked (GlcNAc...) asparagine glycan is linked to N571. Residue E574 is part of the active site.

The protein belongs to the glycosyl hydrolase 9 (cellulase E) family. As to expression, expressed in basal region of leaf blade and proximal parts of leaf and floral organ.

The protein localises to the membrane. The catalysed reaction is Endohydrolysis of (1-&gt;4)-beta-D-glucosidic linkages in cellulose, lichenin and cereal beta-D-glucans.. In Arabidopsis thaliana (Mouse-ear cress), this protein is Endoglucanase 7 (KOR2).